The following is a 377-amino-acid chain: UPF0754 membrane protein BPUM_0927 (377 aa).

The next 2 membrane-spanning stretches (helical) occupy residues 1–21 (MNIF…GAAT) and 357–377 (FLGG…VTLF).

It belongs to the UPF0754 family.

The protein resides in the cell membrane. This chain is UPF0754 membrane protein BPUM_0927, found in Bacillus pumilus (strain SAFR-032).